Reading from the N-terminus, the 209-residue chain is MENGKRDRQDMEVNTTPRKPRVLLAASGSVAAIKFGNLCHCFTEWAEVRAVVTKSSLHFLDKLSLPQEVTLYTDEDEWSSWNKIGDPVLHIELRRWADVLVIAPLSANTLGKIAGGLCDNLLTCIIRAWDYTKPLFVAPAMNTLMWNNPFTERHLLSLDELGITLIPPIKKRLACGDYGNGAMAEPSLIYSTVRLFWESQAHQQTGGTS.

FMN-binding positions include glycine 28–valine 30 and threonine 53–serine 55. The active-site Proton donor is histidine 90. FMN contacts are provided by residues serine 106–threonine 109 and alanine 140. N-[(R)-4-phosphopantothenoyl]-L-cysteine contacts are provided by asparagine 142, arginine 172, and alanine 174. The active-site Proton donor is cysteine 175. Methionine 183 is an N-[(R)-4-phosphopantothenoyl]-L-cysteine binding site.

Belongs to the HFCD (homooligomeric flavin containing Cys decarboxylase) superfamily. As to quaternary structure, homotrimer. Requires FMN as cofactor. In terms of tissue distribution, expressed in roots, shoots, leaves, flowers, developing siliques and seeds with highest expression in seed embryos and phloem.

The catalysed reaction is N-[(R)-4-phosphopantothenoyl]-L-cysteine + H(+) = (R)-4'-phosphopantetheine + CO2. It functions in the pathway cofactor biosynthesis; coenzyme A biosynthesis; CoA from (R)-pantothenate: step 3/5. Its function is as follows. Involved in plant growth, and salt and osmotic tolerance. Catalyzes the decarboxylation of 4'-phosphopantothenoylcysteine to 4'-phosphopantetheine, a key step in coenzyme A biosynthesis. The enzyme is also able to decarboxylate pantothenoylcysteine to pantothenoylcysteamine. This is Phosphopantothenoylcysteine decarboxylase from Arabidopsis thaliana (Mouse-ear cress).